We begin with the raw amino-acid sequence, 302 residues long: NAD kinase 1 (302 aa).

The Proton acceptor role is filled by Asp-67. NAD(+)-binding positions include 67-68 (DG), Arg-72, 148-149 (ND), Lys-178, and Asp-180.

Belongs to the NAD kinase family. A divalent metal cation is required as a cofactor.

The protein localises to the cytoplasm. The enzyme catalyses NAD(+) + ATP = ADP + NADP(+) + H(+). Its function is as follows. Involved in the regulation of the intracellular balance of NAD and NADP, and is a key enzyme in the biosynthesis of NADP. Catalyzes specifically the phosphorylation on 2'-hydroxyl of the adenosine moiety of NAD to yield NADP. The protein is NAD kinase 1 of Prochlorococcus marinus (strain NATL2A).